Here is a 161-residue protein sequence, read N- to C-terminus: Regulator of ribonuclease activity A (161 aa).

This sequence belongs to the RraA family. Homotrimer. Binds to both RNA-binding sites in the C-terminal region of Rne and to RhlB.

The protein resides in the cytoplasm. In terms of biological role, globally modulates RNA abundance by binding to RNase E (Rne) and regulating its endonucleolytic activity. Can modulate Rne action in a substrate-dependent manner by altering the composition of the degradosome. Modulates RNA-binding and helicase activities of the degradosome. The protein is Regulator of ribonuclease activity A of Pectobacterium atrosepticum (strain SCRI 1043 / ATCC BAA-672) (Erwinia carotovora subsp. atroseptica).